A 286-amino-acid chain; its full sequence is Protease HtpX (286 aa).

The next 2 helical transmembrane spans lie at 4–24 (ILLF…ILSL) and 33–53 (TGLL…SLFL). Residue His-139 coordinates Zn(2+). Residue Glu-140 is part of the active site. Residue His-143 participates in Zn(2+) binding. 2 helical membrane passes run 147 to 167 (GDMV…IFVS) and 186 to 206 (IYFL…SMIA). A Zn(2+)-binding site is contributed by Glu-214.

Belongs to the peptidase M48B family. Zn(2+) serves as cofactor.

The protein localises to the cell inner membrane. The sequence is that of Protease HtpX from Pasteurella multocida (strain Pm70).